A 463-amino-acid chain; its full sequence is Probable glycosyltransferase 3 (463 aa).

Topologically, residues 1-24 (MAVTGGGRPAVRQQAARGKQMQRT) are cytoplasmic. A helical; Signal-anchor for type II membrane protein membrane pass occupies residues 25 to 47 (FNNVKITLICGFITLLVLRGTVG). Topologically, residues 48-463 (INLLTYGVGG…ALKMDAKIES (416 aa)) are lumenal. Residues 82–125 (EIRSDTDDDDDDEEEEPLGVDASTTTTTNSTTTTATAARRRSSN) are disordered. The segment covering 87-99 (TDDDDDDEEEEPL) has biased composition (acidic residues). Residues 103–118 (ASTTTTTNSTTTTATA) show a composition bias toward low complexity. N-linked (GlcNAc...) asparagine glycosylation is found at asparagine 110, asparagine 125, and asparagine 442.

The protein belongs to the glycosyltransferase 34 family.

It is found in the golgi apparatus membrane. Its function is as follows. Probable glycosyltransferase that may be involved in the biosynthesis of xyloglucan. This chain is Probable glycosyltransferase 3, found in Oryza sativa subsp. japonica (Rice).